The following is a 243-amino-acid chain: Peptidyl-tRNA hydrolase (243 aa).

TRNA is bound at residue tyrosine 14. Histidine 19 functions as the Proton acceptor in the catalytic mechanism. TRNA is bound by residues phenylalanine 64, asparagine 66, and asparagine 112. The segment at 188–243 (GGKAEEEKPRKDNKTTEKKPAGQSHIHQARNHNQPKVLTTGPMADILKKMFGNKGE) is disordered. Positions 190–207 (KAEEEKPRKDNKTTEKKP) are enriched in basic and acidic residues.

It belongs to the PTH family. Monomer.

The protein resides in the cytoplasm. The enzyme catalyses an N-acyl-L-alpha-aminoacyl-tRNA + H2O = an N-acyl-L-amino acid + a tRNA + H(+). Hydrolyzes ribosome-free peptidyl-tRNAs (with 1 or more amino acids incorporated), which drop off the ribosome during protein synthesis, or as a result of ribosome stalling. Its function is as follows. Catalyzes the release of premature peptidyl moieties from peptidyl-tRNA molecules trapped in stalled 50S ribosomal subunits, and thus maintains levels of free tRNAs and 50S ribosomes. The chain is Peptidyl-tRNA hydrolase from Rhizobium leguminosarum bv. trifolii (strain WSM2304).